We begin with the raw amino-acid sequence, 487 residues long: Glutamate--tRNA ligase (487 aa).

The short motif at 13–23 (PSPTGLFHIGG) is the 'HIGH' region element. Residues 255 to 259 (KLSKR) carry the 'KMSKS' region motif. Lys258 serves as a coordination point for ATP.

It belongs to the class-I aminoacyl-tRNA synthetase family. Glutamate--tRNA ligase type 1 subfamily. In terms of assembly, monomer.

The protein resides in the cytoplasm. It catalyses the reaction tRNA(Glu) + L-glutamate + ATP = L-glutamyl-tRNA(Glu) + AMP + diphosphate. Functionally, catalyzes the attachment of glutamate to tRNA(Glu) in a two-step reaction: glutamate is first activated by ATP to form Glu-AMP and then transferred to the acceptor end of tRNA(Glu). This Malacoplasma penetrans (strain HF-2) (Mycoplasma penetrans) protein is Glutamate--tRNA ligase.